Consider the following 840-residue polypeptide: Sorting nexin-25 (840 aa).

In terms of domain architecture, PXA spans 1–164 (MDRVLRDVFD…MLLRQLEYRE (164 aa)). Residues 287–401 (QFEDIMTNPF…LVSDLYEKLM (115 aa)) form the RGS domain. The segment at 404 to 437 (EEEEEPDAQLASEKDELGSGGEAGEEAVEGTSGV) is disordered. Residues 446–494 (IKLRELNEKLEYKRQALSSIQNAPKPDKKIISKLKDEILLIEKECTALQ) adopt a coiled-coil conformation. Residues 508–628 (GLWRASITSA…AFLSPSPDYL (121 aa)) form the PX domain. Phosphoserine is present on Ser-665.

This sequence belongs to the sorting nexin family.

It is found in the endosome membrane. Its function is as follows. May be involved in several stages of intracellular trafficking. The polypeptide is Sorting nexin-25 (Snx25) (Mus musculus (Mouse)).